Here is a 298-residue protein sequence, read N- to C-terminus: Syntaxin-125 (298 aa).

Residue M1 is modified to N-acetylmethionine. At 1-274 (MNDLFSNSFK…KSSRKWTCYA (274 aa)) the chain is on the cytoplasmic side. A coiled-coil region spans residues 25–155 (TMNLDKFFED…NEYKETVERR (131 aa)). One can recognise a t-SNARE coiled-coil homology domain in the interval 198–260 (ISEIQERHDA…RRGTDQLQDA (63 aa)). A helical; Anchor for type IV membrane protein transmembrane segment spans residues 275–295 (IILFIVIFILLLIPLLPHIML). The Vesicular portion of the chain corresponds to 296–298 (MLK).

Belongs to the syntaxin family. In terms of assembly, part of the t-SNARE complex.

The protein localises to the membrane. Functionally, vesicle trafficking protein that functions in the secretory pathway. This chain is Syntaxin-125 (SYP125), found in Arabidopsis thaliana (Mouse-ear cress).